Here is a 283-residue protein sequence, read N- to C-terminus: Thymidylate synthase (283 aa).

R22 contributes to the dUMP binding site. C160 acts as the Nucleophile in catalysis. Residues 180–183 (RSCD), N191, and 221–223 (HIY) each bind dUMP. D183 lines the (6R)-5,10-methylene-5,6,7,8-tetrahydrofolate pocket. Residue A282 coordinates (6R)-5,10-methylene-5,6,7,8-tetrahydrofolate.

The protein belongs to the thymidylate synthase family. Bacterial-type ThyA subfamily. In terms of assembly, homodimer.

The protein resides in the cytoplasm. It carries out the reaction dUMP + (6R)-5,10-methylene-5,6,7,8-tetrahydrofolate = 7,8-dihydrofolate + dTMP. Its pathway is pyrimidine metabolism; dTTP biosynthesis. Functionally, catalyzes the reductive methylation of 2'-deoxyuridine-5'-monophosphate (dUMP) to 2'-deoxythymidine-5'-monophosphate (dTMP) while utilizing 5,10-methylenetetrahydrofolate (mTHF) as the methyl donor and reductant in the reaction, yielding dihydrofolate (DHF) as a by-product. This enzymatic reaction provides an intracellular de novo source of dTMP, an essential precursor for DNA biosynthesis. This is Thymidylate synthase from Idiomarina loihiensis (strain ATCC BAA-735 / DSM 15497 / L2-TR).